Reading from the N-terminus, the 268-residue chain is Shikimate dehydrogenase (NADP(+)) (268 aa).

Residues 13–15 (SLS) and Thr-60 each bind shikimate. Lys-64 serves as the catalytic Proton acceptor. An NADP(+)-binding site is contributed by Glu-76. Shikimate-binding residues include Asn-85 and Asp-100. Residues 124–128 (GAGGA), 148–153 (NRTMAR), and Ile-209 each bind NADP(+). Tyr-211 contacts shikimate. Gly-232 contributes to the NADP(+) binding site.

Belongs to the shikimate dehydrogenase family. As to quaternary structure, homodimer.

The enzyme catalyses shikimate + NADP(+) = 3-dehydroshikimate + NADPH + H(+). It functions in the pathway metabolic intermediate biosynthesis; chorismate biosynthesis; chorismate from D-erythrose 4-phosphate and phosphoenolpyruvate: step 4/7. Its function is as follows. Involved in the biosynthesis of the chorismate, which leads to the biosynthesis of aromatic amino acids. Catalyzes the reversible NADPH linked reduction of 3-dehydroshikimate (DHSA) to yield shikimate (SA). This is Shikimate dehydrogenase (NADP(+)) from Staphylococcus aureus (strain USA300).